The chain runs to 199 residues: Calcium-binding protein CAST (199 aa).

Positions 1–13 (MGSVQDENKDEFK) are enriched in basic and acidic residues. Residues 1–31 (MGSVQDENKDEFKQSLTRGKLKPSSSSSFRL) are disordered. EF-hand domains are found at residues 36–71 (LNSI…LGLD), 75–110 (SEIE…VFFG), 125–160 (QDES…LGLP), and 163–198 (SEID…VIVP). Residues D49, N51, D53, and E60 each contribute to the Ca(2+) site. Residues D138, N140, D142, E149, D178, D180, R182, and E187 each contribute to the Ca(2+) site.

Functionally, not known. Probably binds 3 calcium ions. The polypeptide is Calcium-binding protein CAST (Solanum tuberosum (Potato)).